A 129-amino-acid polypeptide reads, in one-letter code: Glycine cleavage system H protein (129 aa).

In terms of domain architecture, Lipoyl-binding spans Thr23 to Lys104. Lys64 is subject to N6-lipoyllysine.

This sequence belongs to the GcvH family. In terms of assembly, the glycine cleavage system is composed of four proteins: P, T, L and H. It depends on (R)-lipoate as a cofactor.

Functionally, the glycine cleavage system catalyzes the degradation of glycine. The H protein shuttles the methylamine group of glycine from the P protein to the T protein. The polypeptide is Glycine cleavage system H protein (Nitrosomonas eutropha (strain DSM 101675 / C91 / Nm57)).